The following is a 128-amino-acid chain: Small ribosomal subunit protein uS10 (128 aa).

The protein belongs to the universal ribosomal protein uS10 family.

This is Small ribosomal subunit protein uS10 (RPS20) from Oryza sativa subsp. japonica (Rice).